A 624-amino-acid chain; its full sequence is Ubiquitin-associated and SH3 domain-containing protein A (624 aa).

Positions 19–60 constitute a UBA domain; sequence RSTPSLLDPLLAMGFPTHTALKALAATGRKTAEAAADWLHGH. Positions 238–303 constitute an SH3 domain; that stretch reads VHYQTLKALF…PENYTERANE (66 aa). Residues 358-624 form a phosphatase-like region; the sequence is RRGILVVRHG…FNWRNWISSN (267 aa).

Homodimer or homooligomer. Interacts with CBL. Part of a complex containing CBL and activated EGFR. Interacts with ubiquitin and with mono-ubiquitinated proteins. Interacts with dynamin.

The protein resides in the cytoplasm. It localises to the nucleus. In terms of biological role, interferes with CBL-mediated down-regulation and degradation of receptor-type tyrosine kinases. Promotes accumulation of activated target receptors, such as T-cell receptors, EGFR and PDGFRB, on the cell surface. May inhibit dynamin-dependent endocytic pathways by functionally sequestering dynamin via its SH3 domain. Exhibits negligible protein tyrosine phosphatase activity at neutral pH. May act as a dominant-negative regulator of UBASH3B-dependent dephosphorylation. This Mus musculus (Mouse) protein is Ubiquitin-associated and SH3 domain-containing protein A (Ubash3a).